We begin with the raw amino-acid sequence, 444 residues long: Phosphoglucosamine mutase (444 aa).

Ser-101 serves as the catalytic Phosphoserine intermediate. Mg(2+) is bound by residues Ser-101, Asp-240, Asp-242, and Asp-244. Ser-101 is subject to Phosphoserine.

Belongs to the phosphohexose mutase family. The cofactor is Mg(2+). In terms of processing, activated by phosphorylation.

The catalysed reaction is alpha-D-glucosamine 1-phosphate = D-glucosamine 6-phosphate. Functionally, catalyzes the conversion of glucosamine-6-phosphate to glucosamine-1-phosphate. The chain is Phosphoglucosamine mutase from Aeromonas hydrophila subsp. hydrophila (strain ATCC 7966 / DSM 30187 / BCRC 13018 / CCUG 14551 / JCM 1027 / KCTC 2358 / NCIMB 9240 / NCTC 8049).